A 464-amino-acid polypeptide reads, in one-letter code: 3-deoxy-D-manno-octulosonic acid transferase (464 aa).

A helical; Signal-anchor membrane pass occupies residues 2–22 (MLLYYALSFILLPIYFIIILI). The RPE1 insert domain occupies 47–93 (YSLDFLHNEANKERFKGDTERRTAAYTSVREDSSTGSTSKLPLEASY). E107 (proton acceptor) is an active-site residue. Residues 311–312 (PR), 352–354 (FGE), and 377–380 (NILE) contribute to the CMP site.

The protein belongs to the glycosyltransferase group 1 family.

It is found in the cell inner membrane. It catalyses the reaction lipid IVA (E. coli) + CMP-3-deoxy-beta-D-manno-octulosonate = alpha-Kdo-(2-&gt;6)-lipid IVA (E. coli) + CMP + H(+). It participates in bacterial outer membrane biogenesis; LPS core biosynthesis. Its function is as follows. Involved in lipopolysaccharide (LPS) biosynthesis. Catalyzes the transfer of 3-deoxy-D-manno-octulosonate (Kdo) residue(s) from CMP-Kdo to lipid IV(A), the tetraacyldisaccharide-1,4'-bisphosphate precursor of lipid A. The polypeptide is 3-deoxy-D-manno-octulosonic acid transferase (waaA) (Rickettsia felis (strain ATCC VR-1525 / URRWXCal2) (Rickettsia azadi)).